Consider the following 367-residue polypeptide: DNA replication and repair protein RecF (367 aa).

Gly30–Thr37 lines the ATP pocket.

This sequence belongs to the RecF family.

The protein localises to the cytoplasm. The RecF protein is involved in DNA metabolism; it is required for DNA replication and normal SOS inducibility. RecF binds preferentially to single-stranded, linear DNA. It also seems to bind ATP. The sequence is that of DNA replication and repair protein RecF from Pseudomonas fluorescens (strain ATCC BAA-477 / NRRL B-23932 / Pf-5).